The sequence spans 63 residues: Prokaryotic ubiquitin-like protein Pup (63 aa).

Positions 1–11 are enriched in basic and acidic residues; sequence MAQEQTRRGGG. The tract at residues 1-36 is disordered; it reads MAQEQTRRGGGGDDDEFTSSTSVGQERREKLTEETD. Positions 20–57 are ARC ATPase binding; sequence STSVGQERREKLTEETDDLLDEIDDVLEENAEDFVRAY. A coiled-coil region spans residues 23 to 51; the sequence is VGQERREKLTEETDDLLDEIDDVLEENAE. A Deamidated glutamine modification is found at Gln63. An Isoglutamyl lysine isopeptide (Gln-Lys) (interchain with K-? in acceptor proteins) cross-link involves residue Gln63.

The protein belongs to the prokaryotic ubiquitin-like protein family. Strongly interacts with the proteasome-associated ATPase ARC through a hydrophobic interface; the interacting region of Pup lies in its C-terminal half. There is one Pup binding site per ARC hexamer ring. Is modified by deamidation of its C-terminal glutamine to glutamate by the deamidase Dop, a prerequisite to the subsequent pupylation process.

Its pathway is protein degradation; proteasomal Pup-dependent pathway. Its function is as follows. Protein modifier that is covalently attached to lysine residues of substrate proteins, thereby targeting them for proteasomal degradation. The tagging system is termed pupylation. This Mycobacterium leprae (strain Br4923) protein is Prokaryotic ubiquitin-like protein Pup.